Consider the following 615-residue polypeptide: Hypermethylated in cancer 2 protein (615 aa).

Positions 46–109 (CDVIIMVENS…IYTGKLLPSD (64 aa)) constitute a BTB domain. Residues 144 to 167 (KPFGSGRAGSTGMGRPPRSQRLST) form a disordered region. 3 positions are modified to phosphoserine: serine 166, serine 169, and serine 197. Disordered stretches follow at residues 182-208 (RKGA…GSNQ) and 229-421 (GCSS…SGHA). The tract at residues 246–250 (GLDLS) is binding to CtBP. Residues 280 to 296 (SPPAASAPPVANSASYS) show a composition bias toward low complexity. Residues 336-356 (KKEWGKKEPVAGSPFERREAG) show a composition bias toward basic and acidic residues. Serine 348 is modified (phosphoserine). A compositionally biased stretch (low complexity) spans 379 to 388 (ASGAGPSGPY). Serine 412 carries the post-translational modification Phosphoserine. C2H2-type zinc fingers lie at residues 442 to 469 (YVCI…EEEL), 505 to 532 (FKCS…LTRP), 533 to 560 (FPCN…GLKP), 561 to 588 (FACD…GEKP), and 589 to 615 (YECQ…TSPS).

The protein belongs to the krueppel C2H2-type zinc-finger protein family. Hic subfamily. As to quaternary structure, self-associates. Interacts with HIC1. As to expression, highest levels in cerebellum.

Its subcellular location is the nucleus. Its function is as follows. Transcriptional repressor. In Homo sapiens (Human), this protein is Hypermethylated in cancer 2 protein (HIC2).